Consider the following 156-residue polypeptide: Small ribosomal subunit protein uS7 (156 aa).

Belongs to the universal ribosomal protein uS7 family. As to quaternary structure, part of the 30S ribosomal subunit. Contacts proteins S9 and S11.

Its function is as follows. One of the primary rRNA binding proteins, it binds directly to 16S rRNA where it nucleates assembly of the head domain of the 30S subunit. Is located at the subunit interface close to the decoding center, probably blocks exit of the E-site tRNA. This chain is Small ribosomal subunit protein uS7, found in Streptococcus pyogenes serotype M1.